The primary structure comprises 238 residues: Survival of motor neuron-related-splicing factor 30 (238 aa).

Residues 72 to 132 (SWKVGDKCMA…KPVEEGRKAK (61 aa)) enclose the Tudor domain. The Nuclear localization signal signature appears at 142-160 (KKEMIAQQREYKKKKALKK). A Phosphoserine modification is found at Ser201. N6-acetyllysine is present on Lys219.

It belongs to the SMN family. As to quaternary structure, associates with spliceosomes. Associates with U4/U5/U6 tri-snRNP and with U2 snRNP.

It is found in the nucleus speckle. It localises to the nucleus. The protein localises to the cajal body. In terms of biological role, involved in spliceosome assembly. The protein is Survival of motor neuron-related-splicing factor 30 (Smndc1) of Mus musculus (Mouse).